Consider the following 447-residue polypeptide: Secretin receptor (447 aa).

Residues 1-28 (MLSTMSPRLSLLLLWLLLLINAAHPVGA) form the signal peptide. Over 29 to 140 (LPRLCDVRRV…NERRHAYLLK (112 aa)) the chain is Extracellular. Cystine bridges form between Cys46–Cys74, Cys65–Cys106, and Cys88–Cys122. Asn71, Asn99, Asn105, and Asn127 each carry an N-linked (GlcNAc...) asparagine glycan. A helical transmembrane segment spans residues 141–166 (LKVMYTVGYSSSLAMLLVALSILCSF). The Cytoplasmic segment spans residues 167 to 173 (RRLHCTR). Residues 174-194 (NYIHMHLFVSFILRALSNFIK) traverse the membrane as a helical segment. Residues 195–215 (DAVLFPADDVTYCDAHRAGCK) are Extracellular-facing. A disulfide bridge connects residues Cys214 and Cys284. Residues 216–238 (LVMIFFQYCIMANYAWLLVEGLY) traverse the membrane as a helical segment. Residues 239–253 (LHTLLAISFFSERKC) are Cytoplasmic-facing. A helical membrane pass occupies residues 254–275 (LQAFVLFGWGSPAIFVALWAVT). The Extracellular portion of the chain corresponds to 276 to 290 (RHFLEDFGCWDINSN). N-linked (GlcNAc...) asparagine glycosylation is present at Asn290. Residues 291–314 (ASIWWVIRGPVILSIVINFIFFIN) form a helical membrane-spanning segment. The Cytoplasmic segment spans residues 315 to 339 (ILRILMRKLRTQETRGNETHHYKRL). Residues 340 to 355 (AKSTLLLIPLFGIHYI) form a helical membrane-spanning segment. Over 356–366 (VFAFSPEGAME) the chain is Extracellular. Residues 367-390 (VQLFFELALGSFQGLVVAVLYCFL) traverse the membrane as a helical segment. At 391–447 (NGELEVQKKWRQWHLQEFPLRPVALSNSFSNATNGPTHSTKAGTSEQSRSIPGANVI) the chain is on the cytoplasmic side. A compositionally biased stretch (polar residues) spans 423-440 (TNGPTHSTKAGTSEQSRS). The segment at 423–447 (TNGPTHSTKAGTSEQSRSIPGANVI) is disordered.

The protein belongs to the G-protein coupled receptor 2 family. In terms of processing, phosphorylated on Ser and Thr residues at the cytoplasmic C-terminus by G protein-coupled receptor kinases (GRKs). As to expression, in brain, expressed in the hippocampal CA1 region, the lower layer of cerebral cortex, the anterior olfactory nuclei, the anterior ventrolateral thalamus, the lateral region of hypothalamus, substantia nigra, tegmental area and central nucleus of the inferior colliculus, the ventral supramamillary nucleus and the cerebellum. Expressed in brown adipocytes: expression predominates in mature brown adipocytes (at protein level). Detected in the renal medulla, where it localized predominantly on the basolateral membranes of cells in the collecting ducts (blue arrow) and the ascending thick segments of the loop of Henle.

It localises to the cell membrane. It is found in the basolateral cell membrane. G protein-coupled receptor activated by secretin (SCT), which is involved in different processes such as regulation of the pH of the duodenal content, food intake and water homeostasis. Ligand binding causes a conformation change that triggers signaling via guanine nucleotide-binding proteins (G proteins) and activates cAMP-dependent pathway. Upon binding to secretin, regulates the pH of the duodenum by (1) inhibiting the secretion of gastric acid from the parietal cells of the stomach and (2) stimulating the production of bicarbonate (NaHCO(3)) from the ductal cells of the pancreas. In addition to regulating the pH of the duodenal content, plays a central role in diet induced thermogenesis: acts as a non-sympathetic brown fat (BAT) activator mediating prandial thermogenesis, which consequentially induces satiation. Mechanistically, secretin released by the gut after a meal binds to secretin receptor (SCTR) in brown adipocytes, activating brown fat thermogenesis by stimulating lipolysis, which is sensed in the brain and promotes satiation. Also able to stimulate lipolysis in white adipocytes. Also plays an important role in cellular osmoregulation by regulating renal water reabsorption. Also plays a role in the central nervous system: required for synaptic plasticity. The protein is Secretin receptor of Mus musculus (Mouse).